We begin with the raw amino-acid sequence, 435 residues long: 5-methylthioadenosine/S-adenosylhomocysteine deaminase (435 aa).

Residues H65 and H67 each coordinate Zn(2+). The substrate site is built by E94, R150, and H189. H216 serves as a coordination point for Zn(2+). The substrate site is built by E219 and D304. D304 is a binding site for Zn(2+).

It belongs to the metallo-dependent hydrolases superfamily. MTA/SAH deaminase family. Requires Zn(2+) as cofactor.

It catalyses the reaction S-adenosyl-L-homocysteine + H2O + H(+) = S-inosyl-L-homocysteine + NH4(+). The enzyme catalyses S-methyl-5'-thioadenosine + H2O + H(+) = S-methyl-5'-thioinosine + NH4(+). Functionally, catalyzes the deamination of 5-methylthioadenosine and S-adenosyl-L-homocysteine into 5-methylthioinosine and S-inosyl-L-homocysteine, respectively. Is also able to deaminate adenosine. The chain is 5-methylthioadenosine/S-adenosylhomocysteine deaminase from Bacillus cereus (strain AH187).